The sequence spans 207 residues: Superoxide dismutase [Mn] (207 aa).

Positions 28, 76, 160, and 164 each coordinate Mn(2+).

The protein belongs to the iron/manganese superoxide dismutase family. Requires Mn(2+) as cofactor.

The catalysed reaction is 2 superoxide + 2 H(+) = H2O2 + O2. Its function is as follows. Destroys superoxide anion radicals which are normally produced within the cells and which are toxic to biological systems. This chain is Superoxide dismutase [Mn] (sodA), found in Mycobacterium avium.